We begin with the raw amino-acid sequence, 116 residues long: Putative pterin-4-alpha-carbinolamine dehydratase 1 (116 aa).

The protein belongs to the pterin-4-alpha-carbinolamine dehydratase family.

The enzyme catalyses (4aS,6R)-4a-hydroxy-L-erythro-5,6,7,8-tetrahydrobiopterin = (6R)-L-erythro-6,7-dihydrobiopterin + H2O. This chain is Putative pterin-4-alpha-carbinolamine dehydratase 1, found in Gloeobacter violaceus (strain ATCC 29082 / PCC 7421).